The chain runs to 428 residues: Oxysterol-binding protein 9 (428 aa).

Polar residues predominate over residues 1 to 11 (MTEVQSITTSG). Disordered stretches follow at residues 1-32 (MTEVQSITTSGEIKMPLSPSSSSSSISSSTTN) and 396-428 (ALIEDNQRKQKKEKDEKLKKDEKLKKEDKKNQK). Low complexity predominate over residues 18–32 (SPSSSSSSISSSTTN). Residues 389–422 (EEAKKYKALIEDNQRKQKKEKDEKLKKDEKLKKE) adopt a coiled-coil conformation.

Belongs to the OSBP family.

This Dictyostelium discoideum (Social amoeba) protein is Oxysterol-binding protein 9 (osbI).